The chain runs to 502 residues: ATP synthase subunit alpha (502 aa).

169 to 176 (GDRQTGKT) serves as a coordination point for ATP.

The protein belongs to the ATPase alpha/beta chains family. As to quaternary structure, F-type ATPases have 2 components, CF(1) - the catalytic core - and CF(0) - the membrane proton channel. CF(1) has five subunits: alpha(3), beta(3), gamma(1), delta(1), epsilon(1). CF(0) has three main subunits: a(1), b(2) and c(9-12). The alpha and beta chains form an alternating ring which encloses part of the gamma chain. CF(1) is attached to CF(0) by a central stalk formed by the gamma and epsilon chains, while a peripheral stalk is formed by the delta and b chains.

Its subcellular location is the cell inner membrane. It catalyses the reaction ATP + H2O + 4 H(+)(in) = ADP + phosphate + 5 H(+)(out). In terms of biological role, produces ATP from ADP in the presence of a proton gradient across the membrane. The alpha chain is a regulatory subunit. The chain is ATP synthase subunit alpha from Geotalea daltonii (strain DSM 22248 / JCM 15807 / FRC-32) (Geobacter daltonii).